Reading from the N-terminus, the 153-residue chain is UPF0540 protein At1g62220 (153 aa).

Residues 1–21 (MNATKFVVLLVISVLCAIVTA) form the signal peptide. 2 disordered regions span residues 63-82 (SSATGFNNPKGPDANAYENG) and 122-153 (ARANGKVASASRVKGSSEKKKGKGKKGKGKKD). Low complexity predominate over residues 122-132 (ARANGKVASAS). Residues 141–153 (KKGKGKKGKGKKD) are compositionally biased toward basic residues.

Belongs to the UPF0540 family.

The polypeptide is UPF0540 protein At1g62220 (Arabidopsis thaliana (Mouse-ear cress)).